Here is a 245-residue protein sequence, read N- to C-terminus: 8-amino-3,8-dideoxy-manno-octulosonate cytidylyltransferase (245 aa).

Belongs to the KdsB family.

It is found in the cytoplasm. The catalysed reaction is 8-amino-3,8-dideoxy-alpha-D-manno-octulosonate + CTP = CMP-8-amino-3,8-dideoxy-alpha-D-manno-oct-2-ulosonate + diphosphate. It participates in bacterial outer membrane biogenesis; lipopolysaccharide biosynthesis. Functionally, activates KDO8N (a required 8-carbon sugar) for incorporation into bacterial lipopolysaccharide in the Shewanella genus. The chain is 8-amino-3,8-dideoxy-manno-octulosonate cytidylyltransferase from Shewanella baltica (strain OS223).